The following is a 204-amino-acid chain: Tetraspanin-13 (204 aa).

Topologically, residues 1–19 (MVCGGFACSKNCLCALNLL) are cytoplasmic. A helical transmembrane segment spans residues 20-40 (YTLVSLLLIGIAAWGIGFGLI). Residues 41-44 (SSLR) lie on the Extracellular side of the membrane. Residues 45-65 (VVGVVIAVGIFLFLIALVGLI) form a helical membrane-spanning segment. The Cytoplasmic portion of the chain corresponds to 66–72 (GAVKHHQ). The helical transmembrane segment at 73–93 (VLLFFYMIILLLVFIVQFSVS) threads the bilayer. Topologically, residues 94–167 (CACLALNQEQ…IGRYAGEVLR (74 aa)) are extracellular. 2 N-linked (GlcNAc...) asparagine glycosylation sites follow: asparagine 113 and asparagine 137. Serine 143 is modified (phosphoserine). Residues 168-188 (FVGGIGLFFSFTEILGVWLTY) form a helical membrane-spanning segment. Residues 189 to 204 (RYRNQKDPRANPSAFL) lie on the Cytoplasmic side of the membrane.

It belongs to the tetraspanin (TM4SF) family.

It is found in the membrane. The chain is Tetraspanin-13 (TSPAN13) from Bos taurus (Bovine).